The primary structure comprises 421 residues: UDP-N-acetylglucosamine 1-carboxyvinyltransferase (421 aa).

24–25 (KN) contacts phosphoenolpyruvate. Residue Arg-93 participates in UDP-N-acetyl-alpha-D-glucosamine binding. The active-site Proton donor is Cys-117. Cys-117 bears the 2-(S-cysteinyl)pyruvic acid O-phosphothioketal mark. 2 residues coordinate UDP-N-acetyl-alpha-D-glucosamine: Asp-307 and Ile-329.

The protein belongs to the EPSP synthase family. MurA subfamily.

It is found in the cytoplasm. It carries out the reaction phosphoenolpyruvate + UDP-N-acetyl-alpha-D-glucosamine = UDP-N-acetyl-3-O-(1-carboxyvinyl)-alpha-D-glucosamine + phosphate. The protein operates within cell wall biogenesis; peptidoglycan biosynthesis. Cell wall formation. Adds enolpyruvyl to UDP-N-acetylglucosamine. The polypeptide is UDP-N-acetylglucosamine 1-carboxyvinyltransferase (Blochmanniella pennsylvanica (strain BPEN)).